The primary structure comprises 154 residues: Probable deoxyuridine 5'-triphosphate nucleotidohydrolase (154 aa).

Belongs to the dCTP deaminase family. Archaeal dUTPase subfamily.

It catalyses the reaction dUTP + H2O = dUMP + diphosphate + H(+). It functions in the pathway pyrimidine metabolism; dUMP biosynthesis; dUMP from dCTP (dUTP route): step 2/2. Functionally, this enzyme is involved in nucleotide metabolism: it produces dUMP, the immediate precursor of thymidine nucleotides and it decreases the intracellular concentration of dUTP so that uracil cannot be incorporated into DNA. In Methanopyrus kandleri (strain AV19 / DSM 6324 / JCM 9639 / NBRC 100938), this protein is Probable deoxyuridine 5'-triphosphate nucleotidohydrolase.